The chain runs to 1031 residues: uncharacterized protein (1031 aa).

An SWIM-type zinc finger spans residues 50 to 85; sequence FKVQINLKTAAAHLDCSCSNDKQNCVHIIAALLKYN. Residues 590-751 enclose the Helicase ATP-binding domain; that stretch reads RALEDNQFGG…WSCFDFVLPN (162 aa). 603 to 610 contacts ATP; it reads DEMGLGKT. Positions 702–705 match the DEAQ box motif; the sequence is DEAQ. The 155-residue stretch at 868 to 1022 folds into the Helicase C-terminal domain; that stretch reads ALNIIYEALE…EDVNFFKSLS (155 aa).

It belongs to the SNF2/RAD54 helicase family.

This is an uncharacterized protein from Mycoplasma genitalium (strain ATCC 33530 / DSM 19775 / NCTC 10195 / G37) (Mycoplasmoides genitalium).